A 162-amino-acid polypeptide reads, in one-letter code: UPF0178 protein Rsph17029_2512 (162 aa).

It belongs to the UPF0178 family.

In Cereibacter sphaeroides (strain ATCC 17029 / ATH 2.4.9) (Rhodobacter sphaeroides), this protein is UPF0178 protein Rsph17029_2512.